Reading from the N-terminus, the 252-residue chain is Phosphate import ATP-binding protein PstB (252 aa).

In terms of domain architecture, ABC transporter spans 6–247 (ITIEKLNLYY…PKDERTEKYI (242 aa)). Residue 38 to 45 (GPSGCGKS) participates in ATP binding.

This sequence belongs to the ABC transporter superfamily. Phosphate importer (TC 3.A.1.7) family. As to quaternary structure, the complex is composed of two ATP-binding proteins (PstB), two transmembrane proteins (PstC and PstA) and a solute-binding protein (PstS).

It localises to the cell membrane. It catalyses the reaction phosphate(out) + ATP + H2O = ADP + 2 phosphate(in) + H(+). Part of the ABC transporter complex PstSACB involved in phosphate import. Responsible for energy coupling to the transport system. The protein is Phosphate import ATP-binding protein PstB of Lactobacillus delbrueckii subsp. bulgaricus (strain ATCC 11842 / DSM 20081 / BCRC 10696 / JCM 1002 / NBRC 13953 / NCIMB 11778 / NCTC 12712 / WDCM 00102 / Lb 14).